Reading from the N-terminus, the 352-residue chain is tRNA-specific 2-thiouridylase MnmA (352 aa).

Residues 6 to 13 and L32 contribute to the ATP site; that span reads AMSGGVDS. The active-site Nucleophile is C101. C101 and C194 form a disulfide bridge. ATP is bound at residue G125. Positions 144–146 are interaction with tRNA; it reads KDQ. C194 (cysteine persulfide intermediate) is an active-site residue.

This sequence belongs to the MnmA/TRMU family.

The protein resides in the cytoplasm. It carries out the reaction S-sulfanyl-L-cysteinyl-[protein] + uridine(34) in tRNA + AH2 + ATP = 2-thiouridine(34) in tRNA + L-cysteinyl-[protein] + A + AMP + diphosphate + H(+). Functionally, catalyzes the 2-thiolation of uridine at the wobble position (U34) of tRNA, leading to the formation of s(2)U34. In Frankia alni (strain DSM 45986 / CECT 9034 / ACN14a), this protein is tRNA-specific 2-thiouridylase MnmA.